The sequence spans 234 residues: 2-amino-5-formylamino-6-ribosylaminopyrimidin-4(3H)-one 5'-monophosphate deformylase (234 aa).

Residues Glu-30, His-32, Asp-41, and His-111 each contribute to the Fe cation site.

The protein belongs to the creatininase superfamily. FAPy deformylase family. Homodimer. The cofactor is Fe(2+). It depends on Zn(2+) as a cofactor.

It carries out the reaction 2-amino-5-formylamino-6-(5-phospho-D-ribosylamino)pyrimidin-4(3H)-one + H2O = 2,5-diamino-6-(1-D-ribosylamino)pyrimidin-4(3H)-one 5'-phosphate + formate + H(+). The protein operates within cofactor biosynthesis; coenzyme F420 biosynthesis. It functions in the pathway cofactor biosynthesis; riboflavin biosynthesis. In terms of biological role, catalyzes the hydrolysis of the formamide of 2-amino-5-formylamino-6-ribosylamino-4(3H)-pyrimidinone 5'-monophosphate (FAPy) to form 2,5-diamino-6-ribosylamino-4(3H)-pyrimidinone 5'-phosphate (APy). The protein is 2-amino-5-formylamino-6-ribosylaminopyrimidin-4(3H)-one 5'-monophosphate deformylase of Methanothermobacter thermautotrophicus (strain ATCC 29096 / DSM 1053 / JCM 10044 / NBRC 100330 / Delta H) (Methanobacterium thermoautotrophicum).